The primary structure comprises 329 residues: Small ribosomal subunit protein uS2 (329 aa).

The protein belongs to the universal ribosomal protein uS2 family.

The polypeptide is Small ribosomal subunit protein uS2 (Bradyrhizobium sp. (strain ORS 278)).